The sequence spans 323 residues: Ubiquinone biosynthesis protein COQ4, mitochondrial (323 aa).

Zn(2+) is bound by residues histidine 203, aspartate 204, histidine 207, and glutamate 219.

It belongs to the COQ4 family. In terms of assembly, component of a multi-subunit COQ enzyme complex, composed of at least COQ3, COQ4, COQ5, COQ6, COQ7 and COQ9. It depends on Zn(2+) as a cofactor.

Its subcellular location is the mitochondrion inner membrane. The enzyme catalyses a 4-hydroxy-3-methoxy-5-(all-trans-polyprenyl)benzoate + H(+) = a 2-methoxy-6-(all-trans-polyprenyl)phenol + CO2. Its pathway is cofactor biosynthesis; ubiquinone biosynthesis. In terms of biological role, lyase that catalyzes the C1-decarboxylation of 4-hydroxy-3-methoxy-5-(all-trans-polyprenyl)benzoic acid into 2-methoxy-6-(all-trans-polyprenyl)phenol during ubiquinone biosynthesis. This is Ubiquinone biosynthesis protein COQ4, mitochondrial from Eremothecium gossypii (strain ATCC 10895 / CBS 109.51 / FGSC 9923 / NRRL Y-1056) (Yeast).